The primary structure comprises 1368 residues: Beclin-1-like protein A (1368 aa).

2 stretches are compositionally biased toward low complexity: residues Gly-24–Pro-57 and Asn-122–Asn-135. Disordered stretches follow at residues Gly-24–Glu-64, Asn-122–Met-249, Asn-331–Ser-431, Thr-819–Asn-874, and Ile-992–Asn-1048. Residues Ala-136–Pro-147 are compositionally biased toward polar residues. Residues Asn-148 to Asn-167 are compositionally biased toward low complexity. Over residues Gly-168 to Phe-177 the composition is skewed to polar residues. Residues Asn-179 to Ser-246 are compositionally biased toward low complexity. Low complexity-rich tracts occupy residues Ile-992–Asn-1005 and Asn-1015–Asn-1048. The stretch at Asn-1047 to Ser-1150 forms a coiled coil.

It belongs to the beclin family.

The protein resides in the endosome membrane. Involved in autophagy. May be required to recruit the atg8-phosphatidylinositol conjugate and the atg12-atg5 conjugate to the pre-autophagosomal structure. Required for normal survival when exposed to pathogenic bacteria S.typhimurium by promoting autophagic degradation of intracellular S.typhimurium. This chain is Beclin-1-like protein A (atg6A), found in Dictyostelium discoideum (Social amoeba).